A 416-amino-acid polypeptide reads, in one-letter code: Multifunctional CCA protein (416 aa).

2 residues coordinate ATP: Gly-8 and Arg-11. Residues Gly-8 and Arg-11 each coordinate CTP. The Mg(2+) site is built by Asp-21 and Asp-23. Positions 91, 137, and 140 each coordinate ATP. CTP is bound by residues Arg-91, Arg-137, and Arg-140. The HD domain occupies 228 to 329 (TGLHTMLVLA…IKLFDKADFW (102 aa)).

The protein belongs to the tRNA nucleotidyltransferase/poly(A) polymerase family. Bacterial CCA-adding enzyme type 1 subfamily. As to quaternary structure, monomer. Can also form homodimers and oligomers. Requires Mg(2+) as cofactor. The cofactor is Ni(2+).

The catalysed reaction is a tRNA precursor + 2 CTP + ATP = a tRNA with a 3' CCA end + 3 diphosphate. The enzyme catalyses a tRNA with a 3' CCA end + 2 CTP + ATP = a tRNA with a 3' CCACCA end + 3 diphosphate. Its function is as follows. Catalyzes the addition and repair of the essential 3'-terminal CCA sequence in tRNAs without using a nucleic acid template. Adds these three nucleotides in the order of C, C, and A to the tRNA nucleotide-73, using CTP and ATP as substrates and producing inorganic pyrophosphate. tRNA 3'-terminal CCA addition is required both for tRNA processing and repair. Also involved in tRNA surveillance by mediating tandem CCA addition to generate a CCACCA at the 3' terminus of unstable tRNAs. While stable tRNAs receive only 3'-terminal CCA, unstable tRNAs are marked with CCACCA and rapidly degraded. In Shewanella sp. (strain ANA-3), this protein is Multifunctional CCA protein.